The sequence spans 347 residues: ATPase GET3 (347 aa).

Residue 26–33 (KGGVGKTT) participates in ATP binding. Residue aspartate 57 is part of the active site. Residues glutamate 241 and asparagine 268 each contribute to the ATP site. Residues cysteine 279 and cysteine 282 each coordinate Zn(2+).

Belongs to the arsA ATPase family. Homodimer. Component of the Golgi to ER traffic (GET) complex, which is composed of GET1, GET2 and GET3. Within the complex, GET1 and GET2 form a heterotetramer which is stabilized by phosphatidylinositol binding and which binds to the GET3 homodimer. Interacts with the chloride channel protein GEF1.

The protein resides in the cytoplasm. It localises to the endoplasmic reticulum. Its subcellular location is the golgi apparatus. In terms of biological role, ATPase required for the post-translational delivery of tail-anchored (TA) proteins to the endoplasmic reticulum. Recognizes and selectively binds the transmembrane domain of TA proteins in the cytosol. This complex then targets to the endoplasmic reticulum by membrane-bound receptors GET1 and GET2, where the tail-anchored protein is released for insertion. This process is regulated by ATP binding and hydrolysis. ATP binding drives the homodimer towards the closed dimer state, facilitating recognition of newly synthesized TA membrane proteins. ATP hydrolysis is required for insertion. Subsequently, the homodimer reverts towards the open dimer state, lowering its affinity for the GET1-GET2 receptor, and returning it to the cytosol to initiate a new round of targeting. Cooperates with the HDEL receptor ERD2 to mediate the ATP-dependent retrieval of resident ER proteins that contain a C-terminal H-D-E-L retention signal from the Golgi to the ER. Involved in low-level resistance to the oxyanions arsenite and arsenate, and in heat tolerance. This is ATPase GET3 from Meyerozyma guilliermondii (strain ATCC 6260 / CBS 566 / DSM 6381 / JCM 1539 / NBRC 10279 / NRRL Y-324) (Yeast).